A 352-amino-acid chain; its full sequence is tRNA-specific 2-thiouridylase MnmA (352 aa).

ATP is bound by residues 7 to 14 (GLSGGVDS) and Leu33. Cys94 acts as the Nucleophile in catalysis. Cys94 and Cys193 are oxidised to a cystine. An ATP-binding site is contributed by Gly119. The segment at 143–145 (KDQ) is interaction with tRNA. Cys193 (cysteine persulfide intermediate) is an active-site residue. Residues 298–299 (RY) are interaction with tRNA.

It belongs to the MnmA/TRMU family.

The protein localises to the cytoplasm. It catalyses the reaction S-sulfanyl-L-cysteinyl-[protein] + uridine(34) in tRNA + AH2 + ATP = 2-thiouridine(34) in tRNA + L-cysteinyl-[protein] + A + AMP + diphosphate + H(+). Catalyzes the 2-thiolation of uridine at the wobble position (U34) of tRNA, leading to the formation of s(2)U34. The sequence is that of tRNA-specific 2-thiouridylase MnmA from Trichormus variabilis (strain ATCC 29413 / PCC 7937) (Anabaena variabilis).